The chain runs to 249 residues: NLSDDLSFNFDKFVPNQKNIIFQGDASVSTKGVLEVTKVSKPTTRSIGRALYAAPIQIWDSITGKVASFATSFSFVVKDEPDEKIDGVDGLAFFLAPANSQIPSGSSAGMFGLFCSSNDSKSSNQIIAVEFDSYFGKTYNPWDPDFKHIGIDVNSIKSIKTVKDDWRNGEVADVVITYRAPTKSLTVSLSYPSDGTSNIVTASSVDLKAILPEWVSVGFSGGVGNAAKFDHDVLSWYFTSNLEANQSQT.

Asn118 carries N-linked (GlcNAc...) asparagine glycosylation. Glu130 and Asp132 together coordinate Mn(2+). Residues Asp132, Tyr134, Asn140, and Asp145 each contribute to the Ca(2+) site. Residues Asp145 and His148 each contribute to the Mn(2+) site. Asn245 carries an N-linked (GlcNAc...) asparagine glycan.

It belongs to the leguminous lectin family.

Its function is as follows. Di-N-acetylchitobiose specific lectin. The sequence is that of Anti-H(O) lectin 2 from Ulex europaeus (Furze).